The following is a 373-amino-acid chain: tRNA-specific 2-thiouridylase MnmA (373 aa).

ATP-binding positions include 12-19 (GMSGGVDS) and Met-38. An interaction with target base in tRNA region spans residues 98-100 (NPD). Cys-103 functions as the Nucleophile in the catalytic mechanism. Cys-103 and Cys-200 form a disulfide bridge. Gly-128 contacts ATP. The interval 150–152 (KDQ) is interaction with tRNA. Residue Cys-200 is the Cysteine persulfide intermediate of the active site. Residues 312 to 313 (RY) form an interaction with tRNA region.

It belongs to the MnmA/TRMU family. As to quaternary structure, interacts with TusE.

It is found in the cytoplasm. The enzyme catalyses S-sulfanyl-L-cysteinyl-[protein] + uridine(34) in tRNA + AH2 + ATP = 2-thiouridine(34) in tRNA + L-cysteinyl-[protein] + A + AMP + diphosphate + H(+). Catalyzes the 2-thiolation of uridine at the wobble position (U34) of tRNA(Lys), tRNA(Glu) and tRNA(Gln), leading to the formation of s(2)U34, the first step of tRNA-mnm(5)s(2)U34 synthesis. Sulfur is provided by IscS, via a sulfur-relay system. Binds ATP and its substrate tRNAs. This is tRNA-specific 2-thiouridylase MnmA from Yersinia enterocolitica serotype O:8 / biotype 1B (strain NCTC 13174 / 8081).